A 398-amino-acid polypeptide reads, in one-letter code: MATTLATDVRLSIAHQTRFALRLASTISSNPKSAASNAAFSPVSLYSALSLLAAGAGSATRDQLVATLGTGKVEGLHALAEQVVQFVLADASSTGGSACRFANGVFVDASLLLKPSFQEIAVCKYKAETQSVDFQTKAAEVTTQVNSWVEKVTSGRIKDILPPGSIDNTTKLVLANALYFKGAWTEQFDSYGTKNDYFYLLDGSSVQTPFMSSMDDQYLLSSDGLKVLKLPYKQGGDNRQFFMYILLPEAPGGLSSLAEKLSAEPDFLERHIPRQRVALRQFKLPKFKISFGIEASDLLKCLGLQLPFGDEADFSEMVDSLMPQGLRVSSVFHQAFVEVNEQGTEAAASTAIKMVLQQARPPSVMDFIADHPFLFLVREDISGVVLFMGHVVNPLLSS.

Positions 343-367 are RCL; sequence GTEAAASTAIKMVLQQARPPSVMDF.

This sequence belongs to the serpin family.

Inhibits chymotrypsin and cathepsin G in vitro. This chain is Serpin-Z1A (WZCI), found in Triticum aestivum (Wheat).